The following is a 332-amino-acid chain: NADH-quinone oxidoreductase subunit H (332 aa).

The next 9 helical transmembrane spans lie at 4-24 (FAFF…IFAS), 44-64 (IGPD…MIKL), 78-98 (FIFA…LAAI), 120-140 (VALL…FLGG), 165-185 (VGAL…LVDI), 194-214 (FSWL…ALFI), 255-275 (IAGA…FWII), 279-299 (IMMI…RAAF), and 312-332 (YLIL…AVLL).

The protein belongs to the complex I subunit 1 family. In terms of assembly, NDH-1 is composed of 14 different subunits. Subunits NuoA, H, J, K, L, M, N constitute the membrane sector of the complex.

It localises to the cell inner membrane. It carries out the reaction a quinone + NADH + 5 H(+)(in) = a quinol + NAD(+) + 4 H(+)(out). Its function is as follows. NDH-1 shuttles electrons from NADH, via FMN and iron-sulfur (Fe-S) centers, to quinones in the respiratory chain. The immediate electron acceptor for the enzyme in this species is believed to be ubiquinone. Couples the redox reaction to proton translocation (for every two electrons transferred, four hydrogen ions are translocated across the cytoplasmic membrane), and thus conserves the redox energy in a proton gradient. This subunit may bind ubiquinone. The chain is NADH-quinone oxidoreductase subunit H from Campylobacter jejuni (strain RM1221).